The primary structure comprises 293 residues: 4-hydroxy-tetrahydrodipicolinate synthase (293 aa).

Pyruvate is bound at residue T45. Y133 acts as the Proton donor/acceptor in catalysis. K161 acts as the Schiff-base intermediate with substrate in catalysis. I203 lines the pyruvate pocket.

Belongs to the DapA family. As to quaternary structure, homotetramer; dimer of dimers.

It is found in the cytoplasm. The catalysed reaction is L-aspartate 4-semialdehyde + pyruvate = (2S,4S)-4-hydroxy-2,3,4,5-tetrahydrodipicolinate + H2O + H(+). It participates in amino-acid biosynthesis; L-lysine biosynthesis via DAP pathway; (S)-tetrahydrodipicolinate from L-aspartate: step 3/4. Functionally, catalyzes the condensation of (S)-aspartate-beta-semialdehyde [(S)-ASA] and pyruvate to 4-hydroxy-tetrahydrodipicolinate (HTPA). This chain is 4-hydroxy-tetrahydrodipicolinate synthase, found in Aliivibrio salmonicida (strain LFI1238) (Vibrio salmonicida (strain LFI1238)).